A 402-amino-acid polypeptide reads, in one-letter code: Myb-related protein 1 (402 aa).

In terms of domain architecture, HTH myb-type spans 42–102 (TDAKPRLKWT…HLQKYRLSKN (61 aa)). Residues 73-98 (PKTIMKVMGIPGLTLYHLKSHLQKYR) constitute a DNA-binding region (H-T-H motif). Residues 148-168 (SDALQMQIEVQRRLHEQLEVQ) are a coiled coil. An LHEQLE motif is present at residues 161–166 (LHEQLE). Polar residues predominate over residues 238–260 (QQMQKTYPPNSSLDSCLTSSEGT). 3 disordered regions span residues 238 to 266 (QQMQ…APKM), 344 to 363 (EHRG…FNEN), and 382 to 402 (HDEN…FSWN).

It belongs to the MYB-CC family. In terms of assembly, isoforms 1 and 2: homodimer. Isoform 3: loss of dimerization. In terms of tissue distribution, expressed in phloem and/or cambium.

The protein resides in the nucleus. In terms of biological role, transcription factor that may act on the GAL1 promoter. Acts redundantly with MYR2 as a repressor of flowering and organ elongation under decreased light intensity. Represses gibberellic acid (GA)-dependent responses and affects levels of bioactive GA. In Arabidopsis thaliana (Mouse-ear cress), this protein is Myb-related protein 1.